Reading from the N-terminus, the 303-residue chain is Acetaldehyde dehydrogenase 2 (303 aa).

C130 serves as the catalytic Acyl-thioester intermediate. NAD(+)-binding positions include 161–169 and N272; that span reads SVGPGTRKN.

Belongs to the acetaldehyde dehydrogenase family.

The enzyme catalyses acetaldehyde + NAD(+) + CoA = acetyl-CoA + NADH + H(+). This Burkholderia vietnamiensis (strain G4 / LMG 22486) (Burkholderia cepacia (strain R1808)) protein is Acetaldehyde dehydrogenase 2.